The chain runs to 321 residues: Collectin-43 (321 aa).

The N-terminal stretch at Met1–Gly20 is a signal peptide. The tract at residues Pro43–Ser163 is disordered. Residues Leu47–Asp65 are compositionally biased toward basic and acidic residues. The region spanning Gly49 to Thr162 is the Collagen-like domain. 2 stretches are compositionally biased toward gly residues: residues Gly100–Gly109 and Gly124–Gly133. Positions Lys147–Arg159 are enriched in basic and acidic residues. Residues Gln222–Phe321 enclose the C-type lectin domain. Intrachain disulfides connect Cys224-Cys319 and Cys297-Cys311.

Belongs to the SFTPD family. In terms of assembly, oligomeric complex of 4 set of homotrimers. In terms of processing, hydroxylated. Liver specific.

It is found in the secreted. Lectin that binds to various sugars: mannose = ManNAc &gt; fucose &gt; GlcNAc &gt; glucose = maltose &gt; galactose &gt; lactose &gt; GalNAc. Could play a role in immune defense. The chain is Collectin-43 (CL43) from Bos taurus (Bovine).